The sequence spans 239 residues: Norbelladine 4'-O-methyltransferase 2 (239 aa).

Residues valine 55, glutamate 77, 79 to 80 (GV), serine 85, aspartate 103, and alanine 132 contribute to the S-adenosyl-L-methionine site. Aspartate 155 is an a divalent metal cation binding site. Aspartate 157 contacts S-adenosyl-L-methionine. A divalent metal cation contacts are provided by aspartate 181 and asparagine 182.

It belongs to the class I-like SAM-binding methyltransferase superfamily. Cation-dependent O-methyltransferase family. Mg(2+) is required as a cofactor.

It carries out the reaction norbelladine + S-adenosyl-L-methionine = 4'-O-methylnorbelladine + S-adenosyl-L-homocysteine + H(+). It functions in the pathway alkaloid biosynthesis. Functionally, 4'-O-methyltransferase converting norbelladine to 4'-O-methylnorbelladine. 4'-O-methylnorbelladine is a precursor to all Amaryllidaceae alkaloids such as galanthamine, lycorine and haemanthamine, and including haemanthamine- and crinamine-type alkaloids, promising anticancer agents. This is Norbelladine 4'-O-methyltransferase 2 from Narcissus aff. pseudonarcissus MK-2014 (Daffodil).